Consider the following 158-residue polypeptide: Ribosome-binding factor A (158 aa).

The disordered stretch occupies residues 114 to 158; the sequence is AKDAEVRQVSTGAQYAGDADPYRKPEDEDEETDGSSEKNEGPASA. The span at 148–158 shows a compositional bias: basic and acidic residues; the sequence is SSEKNEGPASA.

This sequence belongs to the RbfA family. Monomer. Binds 30S ribosomal subunits, but not 50S ribosomal subunits or 70S ribosomes.

The protein resides in the cytoplasm. One of several proteins that assist in the late maturation steps of the functional core of the 30S ribosomal subunit. Associates with free 30S ribosomal subunits (but not with 30S subunits that are part of 70S ribosomes or polysomes). Required for efficient processing of 16S rRNA. May interact with the 5'-terminal helix region of 16S rRNA. The chain is Ribosome-binding factor A from Streptomyces griseus subsp. griseus (strain JCM 4626 / CBS 651.72 / NBRC 13350 / KCC S-0626 / ISP 5235).